The primary structure comprises 83 residues: Transmembrane protein EP84R (83 aa).

The next 2 helical transmembrane spans lie at 31 to 51 (VIGIILLVISLLLIFIGIIIL) and 59 to 79 (AGSVLVVLSLILGGGGFFLIY).

The protein belongs to the asfivirus EP84R family.

It is found in the virion membrane. This chain is Transmembrane protein EP84R, found in Ornithodoros (relapsing fever ticks).